We begin with the raw amino-acid sequence, 251 residues long: Triosephosphate isomerase (251 aa).

9–11 (NWK) is a substrate binding site. His95 (electrophile) is an active-site residue. Residue Glu167 is the Proton acceptor of the active site. Residues Gly173, Ser213, and 234–235 (GG) contribute to the substrate site. Ser213 carries the post-translational modification Phosphoserine.

The protein belongs to the triosephosphate isomerase family. As to quaternary structure, homodimer.

It is found in the cytoplasm. It carries out the reaction D-glyceraldehyde 3-phosphate = dihydroxyacetone phosphate. It functions in the pathway carbohydrate biosynthesis; gluconeogenesis. It participates in carbohydrate degradation; glycolysis; D-glyceraldehyde 3-phosphate from glycerone phosphate: step 1/1. Its function is as follows. Involved in the gluconeogenesis. Catalyzes stereospecifically the conversion of dihydroxyacetone phosphate (DHAP) to D-glyceraldehyde-3-phosphate (G3P). This is Triosephosphate isomerase from Bacillus cereus (strain AH820).